A 365-amino-acid polypeptide reads, in one-letter code: Mitogen-activated protein kinase 13 (365 aa).

The 284-residue stretch at 25-308 folds into the Protein kinase domain; it reads YVSPTHVGSG…AAQALTHPFF (284 aa). 31-39 lines the ATP pocket; it reads VGSGAYGSV. Serine 47 carries the phosphoserine modification. ATP is bound at residue lysine 54. Aspartate 150 serves as the catalytic Proton acceptor. Threonine 180 is modified (phosphothreonine; by MAP2K3, MAP2K4, MAP2K6 and MAP2K7). The TXY motif lies at 180 to 182; sequence TGY. Tyrosine 182 is modified (phosphotyrosine; by MAP2K3, MAP2K4, MAP2K6 and MAP2K7). The residue at position 350 (serine 350) is a Phosphoserine.

The protein belongs to the protein kinase superfamily. CMGC Ser/Thr protein kinase family. MAP kinase subfamily. As to quaternary structure, interacts with MAPK8IP2. The cofactor is Mg(2+). Dually phosphorylated on Thr-180 and Tyr-182 by MAP2K3/MKK3, MAP2K4/MKK4, MAP2K6/MKK6 and MAP2K7/MKK7, which activates the enzyme. Dephosphorylated by dual specificity phosphatase DUSP1.

It catalyses the reaction L-seryl-[protein] + ATP = O-phospho-L-seryl-[protein] + ADP + H(+). It carries out the reaction L-threonyl-[protein] + ATP = O-phospho-L-threonyl-[protein] + ADP + H(+). Activated by phosphorylation on threonine and tyrosine by dual specificity kinases, MAP2K3/MKK3, MAP2K6/MKK6, MAP2K4/MKK4 and MAP2K7/MKK7. Activation by ultraviolet radiation, hyperosmotic shock, anisomycin or by TNF-alpha is mediated by MAP2K3/MKK3. Inhibited by dual specificity phosphatase DUSP1. Serine/threonine kinase which acts as an essential component of the MAP kinase signal transduction pathway. MAPK13 is one of the four p38 MAPKs which play an important role in the cascades of cellular responses evoked by extracellular stimuli such as pro-inflammatory cytokines or physical stress leading to direct activation of transcription factors such as ELK1 and ATF2. Accordingly, p38 MAPKs phosphorylate a broad range of proteins and it has been estimated that they may have approximately 200 to 300 substrates each. MAPK13 is one of the less studied p38 MAPK isoforms. Some of the targets are downstream kinases such as MAPKAPK2, which are activated through phosphorylation and further phosphorylate additional targets. Plays a role in the regulation of protein translation by phosphorylating and inactivating EEF2K. Involved in cytoskeletal remodeling through phosphorylation of MAPT and STMN1. Mediates UV irradiation induced up-regulation of the gene expression of CXCL14. Plays an important role in the regulation of epidermal keratinocyte differentiation, apoptosis and skin tumor development. Phosphorylates the transcriptional activator MYB in response to stress which leads to rapid MYB degradation via a proteasome-dependent pathway. MAPK13 also phosphorylates and down-regulates PRKD1 during regulation of insulin secretion in pancreatic beta cells. This chain is Mitogen-activated protein kinase 13 (MAPK13), found in Pan troglodytes (Chimpanzee).